Reading from the N-terminus, the 35-residue chain is Cupiennin-1a (35 aa).

Glutamic acid 1-amide is present on Glu-35.

Belongs to the cationic peptide 04 (cupiennin) family. 01 subfamily. In terms of assembly, monomer. Interacts with CSTX-1 (AC P81694), CSTX-9 (AC P58604), and CSTX-13 (AC P83919). As to expression, expressed by the venom gland.

The protein resides in the secreted. Has antimicrobial activity against B.subtilis, E.coli, E.faecalis, P.denitrificans, P.aeruginosa, P.putida, S.aureus, and S.epidermidis. Shows insecticidal and hemolytic activities. Probably acts by disturbing membrane function with its amphipathic structure. Synergistically increases the insecticidal activity of CSTX-1 (AC P81694), CSTX-9 (AC P58604), and CSTX-13 (AC P83919) by up to 65%. Also inhibits the formation of nitric oxide by neuronal nitric oxide synthase. The sequence is that of Cupiennin-1a from Cupiennius salei (American wandering spider).